The following is a 641-amino-acid chain: Chaperone protein DnaK (641 aa).

Phosphothreonine; by autocatalysis is present on T200. Over residues 602–611 the composition is skewed to low complexity; it reads AASSKASAAS. Positions 602-641 are disordered; the sequence is AASSKASAASSPPPPPGAGGQKSDVIDAEFEKVDKDKPQA. Positions 630–641 are enriched in basic and acidic residues; sequence EFEKVDKDKPQA.

It belongs to the heat shock protein 70 family.

Its function is as follows. Acts as a chaperone. This Methylacidiphilum infernorum (isolate V4) (Methylokorus infernorum (strain V4)) protein is Chaperone protein DnaK.